A 311-amino-acid polypeptide reads, in one-letter code: MSKLLVFGHQNPDTDAIASSYAFDYLAKKAFDLDTEVVALGDPNEETAFALDYFGVSAPRVVTSAKAEGASHVILTDHNEFPQSISDIREVEVYGIVDHHRVANFETANPLYMRVEPVGSASSIVYRLFKENRVDVPKDIAGLLLSGLISDTLLLKSPTTHASDHRVAVELAELAGVKLEEYGMAMLKAGTNLASKSEAELIDIDAKTFELNGNAVRVAQVNTVDIAEVLERKEAIEAAIKEVMASEGYSDFVLMITDIVNSNSEILALGANMDKVETAFDFKLEDNHAFLAGAVSRKKQVVPQLTESFGA.

Residues H9, D13, D15, D77, H99, and D151 each contribute to the Mn(2+) site.

Belongs to the PPase class C family. It depends on Mn(2+) as a cofactor.

It localises to the cytoplasm. It catalyses the reaction diphosphate + H2O = 2 phosphate + H(+). This is Probable manganese-dependent inorganic pyrophosphatase from Streptococcus equi subsp. zooepidemicus (strain MGCS10565).